Reading from the N-terminus, the 369-residue chain is 3-dehydroquinate synthase (369 aa).

NAD(+) is bound by residues Asp-75–Lys-80, Gly-109–Asp-113, Thr-133–Thr-134, Lys-146, Lys-155, and Thr-173–Thr-176. 3 residues coordinate Zn(2+): Glu-188, His-251, and His-268.

This sequence belongs to the sugar phosphate cyclases superfamily. Dehydroquinate synthase family. It depends on Co(2+) as a cofactor. Zn(2+) serves as cofactor. NAD(+) is required as a cofactor.

It is found in the cytoplasm. The catalysed reaction is 7-phospho-2-dehydro-3-deoxy-D-arabino-heptonate = 3-dehydroquinate + phosphate. The protein operates within metabolic intermediate biosynthesis; chorismate biosynthesis; chorismate from D-erythrose 4-phosphate and phosphoenolpyruvate: step 2/7. Functionally, catalyzes the conversion of 3-deoxy-D-arabino-heptulosonate 7-phosphate (DAHP) to dehydroquinate (DHQ). This Legionella pneumophila (strain Corby) protein is 3-dehydroquinate synthase.